The primary structure comprises 185 residues: Elongation factor P (185 aa).

Belongs to the elongation factor P family.

The protein resides in the cytoplasm. Its pathway is protein biosynthesis; polypeptide chain elongation. Involved in peptide bond synthesis. Stimulates efficient translation and peptide-bond synthesis on native or reconstituted 70S ribosomes in vitro. Probably functions indirectly by altering the affinity of the ribosome for aminoacyl-tRNA, thus increasing their reactivity as acceptors for peptidyl transferase. This Brevibacillus brevis (strain 47 / JCM 6285 / NBRC 100599) protein is Elongation factor P.